The following is a 226-amino-acid chain: Ribose-5-phosphate isomerase A (226 aa).

Substrate is bound by residues T26–T29, D82–D85, and K95–G98. E104 (proton acceptor) is an active-site residue. K122 provides a ligand contact to substrate.

This sequence belongs to the ribose 5-phosphate isomerase family. In terms of assembly, homodimer.

It catalyses the reaction aldehydo-D-ribose 5-phosphate = D-ribulose 5-phosphate. Its pathway is carbohydrate degradation; pentose phosphate pathway; D-ribose 5-phosphate from D-ribulose 5-phosphate (non-oxidative stage): step 1/1. In terms of biological role, catalyzes the reversible conversion of ribose-5-phosphate to ribulose 5-phosphate. The sequence is that of Ribose-5-phosphate isomerase A from Streptococcus thermophilus (strain CNRZ 1066).